Here is a 244-residue protein sequence, read N- to C-terminus: Methanethiol S-methyltransferase (244 aa).

The next 5 helical transmembrane spans lie at 7-27 (IIYGAASYLVFLVAFGYAIGF), 41-61 (IAAPIGQAVVVNLVLLGVFAV), 90-110 (LLASVALLLLYWQWRTMPAVI), 120-140 (VALWALFWLGWATVLTSTFMI), and 181-201 (GFVVAFWATPMMTAGHLLFAI).

It belongs to the nurim family.

It is found in the membrane. The enzyme catalyses methanethiol + S-adenosyl-L-methionine = dimethyl sulfide + S-adenosyl-L-homocysteine + H(+). Functionally, catalyzes the methylation of methanethiol (MeSH) to yield dimethylsulphide (DMS). This Mycobacterium tuberculosis (strain ATCC 25618 / H37Rv) protein is Methanethiol S-methyltransferase.